A 584-amino-acid chain; its full sequence is Proteasome-associated ATPase (584 aa).

Residues 16-91 adopt a coiled-coil conformation; the sequence is EELASQVRLL…KEEVDRLAQP (76 aa). 273-278 is a binding site for ATP; it reads GCGKTL. The docks into pockets in the proteasome alpha-ring stretch occupies residues 583 to 584; that stretch reads YL.

The protein belongs to the AAA ATPase family. As to quaternary structure, homohexamer. Assembles into a hexameric ring structure that caps the 20S proteasome core. Strongly interacts with the prokaryotic ubiquitin-like protein Pup through a hydrophobic interface; the interacting region of ARC lies in its N-terminal coiled-coil domain. There is one Pup binding site per ARC hexamer ring. Upon ATP-binding, the C-terminus of ARC interacts with the alpha-rings of the proteasome core, possibly by binding to the intersubunit pockets.

It functions in the pathway protein degradation; proteasomal Pup-dependent pathway. In terms of biological role, ATPase which is responsible for recognizing, binding, unfolding and translocation of pupylated proteins into the bacterial 20S proteasome core particle. May be essential for opening the gate of the 20S proteasome via an interaction with its C-terminus, thereby allowing substrate entry and access to the site of proteolysis. Thus, the C-termini of the proteasomal ATPase may function like a 'key in a lock' to induce gate opening and therefore regulate proteolysis. This Nocardioides sp. (strain ATCC BAA-499 / JS614) protein is Proteasome-associated ATPase.